The sequence spans 162 residues: UPF0178 protein RHOS4_24670 (162 aa).

It belongs to the UPF0178 family.

The polypeptide is UPF0178 protein RHOS4_24670 (Cereibacter sphaeroides (strain ATCC 17023 / DSM 158 / JCM 6121 / CCUG 31486 / LMG 2827 / NBRC 12203 / NCIMB 8253 / ATH 2.4.1.) (Rhodobacter sphaeroides)).